The chain runs to 273 residues: 4-hydroxy-3-methylbut-2-enyl diphosphate reductase (273 aa).

A [4Fe-4S] cluster-binding site is contributed by Cys12. (2E)-4-hydroxy-3-methylbut-2-enyl diphosphate-binding residues include His36 and His70. Dimethylallyl diphosphate is bound by residues His36 and His70. Isopentenyl diphosphate-binding residues include His36 and His70. Cys92 provides a ligand contact to [4Fe-4S] cluster. Residue His120 participates in (2E)-4-hydroxy-3-methylbut-2-enyl diphosphate binding. His120 contacts dimethylallyl diphosphate. His120 contacts isopentenyl diphosphate. Glu122 (proton donor) is an active-site residue. Position 157 (Thr157) interacts with (2E)-4-hydroxy-3-methylbut-2-enyl diphosphate. [4Fe-4S] cluster is bound at residue Cys185. Residues Ser213, Ser214, Asn215, and Ser257 each contribute to the (2E)-4-hydroxy-3-methylbut-2-enyl diphosphate site. Positions 213, 214, 215, and 257 each coordinate dimethylallyl diphosphate. 4 residues coordinate isopentenyl diphosphate: Ser213, Ser214, Asn215, and Ser257.

Belongs to the IspH family. It depends on [4Fe-4S] cluster as a cofactor.

It carries out the reaction isopentenyl diphosphate + 2 oxidized [2Fe-2S]-[ferredoxin] + H2O = (2E)-4-hydroxy-3-methylbut-2-enyl diphosphate + 2 reduced [2Fe-2S]-[ferredoxin] + 2 H(+). The enzyme catalyses dimethylallyl diphosphate + 2 oxidized [2Fe-2S]-[ferredoxin] + H2O = (2E)-4-hydroxy-3-methylbut-2-enyl diphosphate + 2 reduced [2Fe-2S]-[ferredoxin] + 2 H(+). The protein operates within isoprenoid biosynthesis; dimethylallyl diphosphate biosynthesis; dimethylallyl diphosphate from (2E)-4-hydroxy-3-methylbutenyl diphosphate: step 1/1. Its pathway is isoprenoid biosynthesis; isopentenyl diphosphate biosynthesis via DXP pathway; isopentenyl diphosphate from 1-deoxy-D-xylulose 5-phosphate: step 6/6. Functionally, catalyzes the conversion of 1-hydroxy-2-methyl-2-(E)-butenyl 4-diphosphate (HMBPP) into a mixture of isopentenyl diphosphate (IPP) and dimethylallyl diphosphate (DMAPP). Acts in the terminal step of the DOXP/MEP pathway for isoprenoid precursor biosynthesis. This chain is 4-hydroxy-3-methylbut-2-enyl diphosphate reductase, found in Helicobacter hepaticus (strain ATCC 51449 / 3B1).